We begin with the raw amino-acid sequence, 394 residues long: GDNF family receptor alpha-like (394 aa).

Positions 1 to 18 are cleaved as a signal peptide; it reads MIVFIFLAMGLSLENEYT. Residues 19–351 are Extracellular-facing; sequence SQTNNCTYLR…TGFHSPFNGE (333 aa). Residues asparagine 23, asparagine 50, asparagine 62, asparagine 67, asparagine 103, and asparagine 116 are each glycosylated (N-linked (GlcNAc...) asparagine). 11 cysteine pairs are disulfide-bonded: cysteine 131/cysteine 189, cysteine 138/cysteine 144, cysteine 155/cysteine 167, cysteine 162/cysteine 210, cysteine 191/cysteine 198, cysteine 220/cysteine 291, cysteine 227/cysteine 233, cysteine 244/cysteine 275, cysteine 252/cysteine 258, cysteine 269/cysteine 316, and cysteine 293/cysteine 304. Residues 149-228 are required for interaction with GDF15; that stretch reads ASYLKACSAN…TCLSVIRSCQ (80 aa). Residues 352 to 371 form a helical membrane-spanning segment; it reads VIYAAMCMTVTCGILLLVMV. Residues 372 to 394 are Cytoplasmic-facing; that stretch reads KLRTSRISSKARDPSSIQIPGEL.

It belongs to the GDNFR family. As to quaternary structure, interacts (via the extracellular domain) with GDF15 and RET; receptor of GDF15, mediates cellular signaling through interaction with RET after GDF15-binding. Interaction with RET requires previous GDF15-binding. Cleaved and inactivated by MMP14, inhibiting the GDF15-GFRAL aversive response. In terms of tissue distribution, expressed in the brainstem, restricted to cells in the area postrema and the immediately adjacent region of the nucleus tractus solitarius (at protein level). Detected at low levels in testis and adipose tissue.

The protein resides in the cell membrane. Specifically inhibited by 3P10 monoclonal antibody. Strongly activated by LY3463251, a long-acting and stable agonist composed of GDF15 conjugated monomeric human IgG4 Fc. Its function is as follows. Brainstem-restricted receptor for GDF15 hormone, which triggers an aversive response, characterized by nausea, vomiting, and/or loss of appetite in response to various stresses. The aversive response is both required to reduce continuing exposure to those stresses at the time of exposure and to promote avoidance behavior in the future. The GDF15-GFRAL aversive response is triggered by stresses, such as anticancer drugs (camptothecin or cisplatin), cancers or drugs such as metformin. Upon interaction with its ligand, GDF15, mediates the GDF15-induced autophosphorylation and activation of the RET tyrosine kinase receptor, leading to activation of MAPK- and AKT- signaling pathways. Ligand-binding activates GFRAL-expressing neurons localized in the area postrema and nucleus tractus solitarius of the brainstem. The GDF15-GFRAL signal induces expression of genes involved in metabolism, such as lipid metabolism in adipose tissues. This is GDNF family receptor alpha-like from Homo sapiens (Human).